Reading from the N-terminus, the 315-residue chain is Olfactory receptor 8J2 (315 aa).

The Extracellular segment spans residues M1 to Q24. N5 is a glycosylation site (N-linked (GlcNAc...) asparagine). A helical transmembrane segment spans residues I25–I45. Residues I46–T57 are Cytoplasmic-facing. Residues P58–A78 traverse the membrane as a helical segment. Residues P79–C97 are Extracellular-facing. C97 and C179 form a disulfide bridge. The chain crosses the membrane as a helical span at residues A98–M118. At A119–L143 the chain is on the cytoplasmic side. The helical transmembrane segment at L144–F164 threads the bilayer. The Extracellular segment spans residues S165–T205. Residues N206–L226 form a helical membrane-spanning segment. Residues R227–S239 are Cytoplasmic-facing. Residues T240–L260 traverse the membrane as a helical segment. Topologically, residues Q261–D271 are extracellular. Residue N265 is glycosylated (N-linked (GlcNAc...) asparagine). A helical membrane pass occupies residues K272–L292. Residues R293–M315 are Cytoplasmic-facing.

It belongs to the G-protein coupled receptor 1 family.

Its subcellular location is the membrane. In terms of biological role, odorant receptor. The chain is Olfactory receptor 8J2 (OR8J2) from Homo sapiens (Human).